Here is a 248-residue protein sequence, read N- to C-terminus: MDFTEKALVLRTGRFREADLWVRFLSPSRGVITAFAFGGCRSRRRFCGCLDALNHVLVKVSSDKRRTYLCLDEGTLLNGPVRLRSDWGRTGVAANCIKFVEAMGVGPEGAADAYDLTCGMLELLETADVVPEIFPVLFRGRLAFDQGYRIDPVRCARCGMRLKDVAGVRFLPREGVFECSAHGGASGGGFMMSAETLDAVRFVQENPPLMWTDIPLSPEGWKQWGRAVDAFIQYHVGLVWDKGRFRRI.

It belongs to the RecO family.

In terms of biological role, involved in DNA repair and RecF pathway recombination. This Oleidesulfovibrio alaskensis (strain ATCC BAA-1058 / DSM 17464 / G20) (Desulfovibrio alaskensis) protein is DNA repair protein RecO.